The following is a 1644-amino-acid chain: MSSVKVAVRVRPFNSREISRESKCIIEMSGNTTCITNPKVPPGTSDSIKRFNYDYSYWSHDPRDAEFSTQSMVYADIGEEMLQHSFDGYNVCIFAYGQTGAGKSYTMMGKQEESQEGVIPMICKDLFRRIQETEGVDLKYSVEVSYMEIYCERVRDLLNPKNKGNLKVREHPLLGPYVEDLSKLAVTSYQDIHDLIDEGNKARTVAATNMNETSSRSHAVFTIFFTQRRVDKMTSLETEKVSKISLVDLAGSERADSTGAKGTRLKEGANINKSLTTLGKVISALAEVASKSKKSKKADFIPYRDSVLTWLLRENLGGNSKTAMIAAISPADINYDETLSTLRYADRAKQIVCKAVVNEDANAKLIRELKEEIQKLRELLKAEGIEVQEGNRRTPTPMICSPNRLRKRTGSSTEMAVDQLQASEKLIAELNETWEEKLKRTEQIRLQREAVFAEMGVAVKEDGITVGVFSPKKSPHLVNLNEDPTLSECLLYYIKDGLTRLGTSEANVPQDIQLSGSHILKEHCVFENKDGVVTLVPHKDALVYLNGRKLVEPEVLQTGSRVILGKNHVFRFTHPEQAREKREKPKDKDVGENPGGNAEAADWNFAQCELLEKQGIDLKAEMQKRLCALEEQFKREKLAADQEFEEQRKTYEARIDALQKQVEEQSMTMSMYSSYSPEDFHQEEDIFVNPLFESCWTAREAGLAAWAFRKWRYHQFTSLRDDLWGNAIFLKEANAISVELKKKVQFQFTLLTDTLYSPLPPELAPSPIIGGALTNGQEDEFGQSPIPRTIVAVEVTDTKNGATHHWSLDKLRQRLELMREMYHNEAELSPTSPDYNVESLTGGDPFYDRFPWFRMVGRSFVYLSNLLYPVPLVHKVAIVNERGDVRGYLRVAVQPVMDEENADFNNGVKQSARIVFDEEQNGGHKIPKIRTIHDKDEKYIEGSNDIMKLEELEQEDADSGRGDSSVASELHESNEHEPGEHLQPGKEFTFRVTVLQATGIAAEYADIFCQFNFLHRHEEAFSTEPVKNSGSGAPLGFYHVQNITVPVTKSFIEYLKTQPIVFKVFGHYQNHPLHKDAKQDCQITRPPPRRMLPPSIPISQPVRSPKFGPLPCPPSSTVLAKHDVLVWFEICELAPNGEYVPAVVDHSDDLPCRGLYLLHQGIQRRIRITIVHEPTAEVKWKDIRELVVGRIRNQPEPADELDDSDSCVLSLGLFPGEVLEVPGDDRSFFRFEAAWDSSLHNSALLNRVTQTGEQIFITLSAYLELENCARPAIITKDLSMIIYGRDARTGPRSLKHLFSGQYRNPEANRLSGVYELSLRRASEAGSPGVQRRQRRVLDTSSTYVRGEENLHGWRPRGDSLIFDHQWELEKLTRLEEVGRVRHLLMLRERLGMDTTPNPTTKTEKDVCNLAQRASASPVHMVIPPSPQTPVKDQQTPTLPERELTPRETELVWKCVKLIQGRIGGKGDPSDTSNQLAVDASPGDEGCADMNASYISGNSIELCSPDRVDIPNGWEAPAPVPQSQEVSLRLYVPELEEIRVSPVVARKGYLNVLEHGGSGWKKRWVTVRRPYVFIFRSDKDPVERAVLNLATAQVECSEDQAAMVKVPNTFSVVTKHRGYLLQTLGDKEVHDWLYAINPLLAGQIR.

Residues 3-351 (SVKVAVRVRP…LRYADRAKQI (349 aa)) enclose the Kinesin motor domain. 97–104 (GQTGAGKS) contacts ATP. The stretch at 358 to 436 (NEDANAKLIR…IAELNETWEE (79 aa)) forms a coiled coil. An FHA domain is found at 499–565 (TRLGTSEANV…LQTGSRVILG (67 aa)). Over residues 574–591 (HPEQAREKREKPKDKDVG) the composition is skewed to basic and acidic residues. Positions 574-598 (HPEQAREKREKPKDKDVGENPGGNA) are disordered. Residues 631 to 672 (EQFKREKLAADQEFEEQRKTYEARIDALQKQVEEQSMTMSMY) adopt a coiled-coil conformation. Disordered regions lie at residues 953 to 985 (EQEDADSGRGDSSVASELHESNEHEPGEHLQPG) and 1419 to 1440 (HMVIPPSPQTPVKDQQTPTLPE). Positions 969 to 984 (ELHESNEHEPGEHLQP) are enriched in basic and acidic residues. A compositionally biased stretch (polar residues) spans 1428 to 1437 (TPVKDQQTPT). One can recognise a PH domain in the interval 1542–1640 (VVARKGYLNV…WLYAINPLLA (99 aa)).

The protein belongs to the TRAFAC class myosin-kinesin ATPase superfamily. Kinesin family. Unc-104 subfamily. Monomer.

The protein localises to the cytoplasm. Its subcellular location is the cytoskeleton. Required for presynaptic maturation, has a role in axonal transport of dense-core vesicles carrying synaptic vesicle precursors, components required for the morphological transformation of axonal growth cones to mature boutons. The protein is Kinesin-like protein unc-104 of Aedes aegypti (Yellowfever mosquito).